Here is a 201-residue protein sequence, read N- to C-terminus: UPF0301 protein ROP_34500 (201 aa).

This sequence belongs to the UPF0301 (AlgH) family.

This is UPF0301 protein ROP_34500 from Rhodococcus opacus (strain B4).